The sequence spans 32 residues: Turripeptide XIV-18 (32 aa).

Ile-30 is subject to Isoleucine amide.

Contains 2 disulfide bonds. As to expression, expressed by the venom duct.

The protein localises to the secreted. In Gemmula speciosa (Splendid gem-turris), this protein is Turripeptide XIV-18.